The following is a 294-amino-acid chain: Ribosomal RNA small subunit methyltransferase A (294 aa).

6 residues coordinate S-adenosyl-L-methionine: asparagine 33, leucine 35, glycine 60, glutamate 81, aspartate 106, and asparagine 131.

It belongs to the class I-like SAM-binding methyltransferase superfamily. rRNA adenine N(6)-methyltransferase family. RsmA subfamily.

It localises to the cytoplasm. It carries out the reaction adenosine(1518)/adenosine(1519) in 16S rRNA + 4 S-adenosyl-L-methionine = N(6)-dimethyladenosine(1518)/N(6)-dimethyladenosine(1519) in 16S rRNA + 4 S-adenosyl-L-homocysteine + 4 H(+). Its function is as follows. Specifically dimethylates two adjacent adenosines (A1518 and A1519) in the loop of a conserved hairpin near the 3'-end of 16S rRNA in the 30S particle. May play a critical role in biogenesis of 30S subunits. In Lactococcus lactis subsp. lactis (strain IL1403) (Streptococcus lactis), this protein is Ribosomal RNA small subunit methyltransferase A.